The chain runs to 422 residues: Ubiquitin-conjugating enzyme E2 Q1 (422 aa).

Met1 is modified (N-acetylmethionine). Residues 1–15 (MQQPQPQGQQQPGPG) show a composition bias toward low complexity. Disordered regions lie at residues 1–40 (MQQP…PGPC) and 174–221 (PLPA…EDDG). The span at 16 to 35 (QQLGGQGAAPGAGGGPGGGP) shows a compositional bias: gly residues. Acidic residues predominate over residues 185 to 200 (VSSEDEDEEMPEDTED). Residues 212-221 (AEGKKSEDDG) are compositionally biased toward basic and acidic residues. Residues 251 to 415 (QATDRLMKEL…VQIHEKNGWY (165 aa)) form the UBC core domain. Cys351 acts as the Glycyl thioester intermediate in catalysis.

The protein belongs to the ubiquitin-conjugating enzyme family. Monomer and homodimer. Only the homodimer is linked to ubiquitin through thiolester activation. Interacts (via N-terminus) with B4GALT1 (via N-terminal cytoplasmic domain). The interaction is direct. Autoubiquitinated in vitro in the presence of NEDD4L. In terms of tissue distribution, widely expressed.

The protein localises to the nucleus. The protein resides in the cell projection. Its subcellular location is the filopodium. It is found in the cytoplasm. It localises to the cytosol. The enzyme catalyses S-ubiquitinyl-[E1 ubiquitin-activating enzyme]-L-cysteine + [E2 ubiquitin-conjugating enzyme]-L-cysteine = [E1 ubiquitin-activating enzyme]-L-cysteine + S-ubiquitinyl-[E2 ubiquitin-conjugating enzyme]-L-cysteine.. It participates in protein modification; protein ubiquitination. Its function is as follows. Catalyzes the covalent attachment of ubiquitin to other proteins. May be involved in hormonal homeostasis in females. Involved in regulation of B4GALT1 cell surface expression, B4GALT1-mediated cell adhesion to laminin and embryoid body formation. The chain is Ubiquitin-conjugating enzyme E2 Q1 (UBE2Q1) from Homo sapiens (Human).